Reading from the N-terminus, the 195-residue chain is Cytochrome b-245 light chain (195 aa).

At 2–7 (GQIEWA) the chain is on the cytoplasmic side. Residues 8–30 (MWANEQALASGLILITGGIVATA) traverse the membrane as a helical segment. Topologically, residues 31–35 (GRFTQ) are extracellular. The chain crosses the membrane as a helical span at residues 36-53 (WYFGAYSIVAGVFVCLLE). Residues 54–69 (YPRGKRKKGSTMERWG) are Cytoplasmic-facing. An intramembrane segment occupies 70-80 (QKYMTAVVKLF). Topologically, residues 81–86 (GPFTRN) are cytoplasmic. A helical membrane pass occupies residues 87-104 (YYVRAVLHLLLSVPAGFL). Residue L105 is a topological domain, extracellular. The helical transmembrane segment at 106-126 (ATILGTACLAIASGIYLLAAV) threads the bilayer. Residues 127–195 (RGEQWTPIEP…NPIPVTDEVV (69 aa)) lie on the Cytoplasmic side of the membrane. The segment at 134 to 195 (IEPKPRERPQ…NPIPVTDEVV (62 aa)) is disordered. T147 is modified (phosphothreonine). K149 participates in a covalent cross-link: Glycyl lysine isopeptide (Lys-Gly) (interchain with G-Cter in ubiquitin). S168 carries the post-translational modification Phosphoserine.

It belongs to the p22phox family. In terms of assembly, component of the phagocyte NADPH oxidase core complex/cytochrome b558 complex, composed of CYBB (heavy chain (beta)) and CYBA (light chain (alpha)). Component of the phagocyte NADPH oxidase complex composed of an obligatory core heterodimer formed by the membrane proteins CYBA and CYBB and the cytosolic regulatory subunits NCF1/p47-phox, NCF2/p67-phox, NCF4/p40-phox and the small GTPase RAC1 or RAC2. Interacts with NCF1 (via SH3 domain). Interacts with SH3PXD2A. Interacts with DUOX1, DUOX2 and TPO. Interacts with NOX4; this interaction mediates superoxide generation. Interacts with calprotectin (S100A8/9). Interacts with GBP7. Interacts with NOXO1. Forms a heterodimer with NOX3 and is essential for activity and cell membrane localization of NOX3. Interacts with NOX1. In terms of processing, phosphorylation at Thr-147 enhances NADPH oxidase activity by promoting NCF1/p47-phox binding. Ubiquitinated at Lys-149 likely by RNF145.

The protein localises to the cell membrane. Functionally, subunit of NADPH oxidase complexes that is required for the NADPH oxidase activity that generates, in various cell types, superoxide from molecular oxygen utilizing NADPH as an electron donor. Subunit of the phagocyte NADPH oxidase complex that mediates the transfer of electrons from cytosolic NADPH to O2 to produce the superoxide anion (O2(-)). In the activated complex, electrons are first transferred from NADPH to flavin adenine dinucleotide (FAD) and subsequently transferred via two heme molecules to molecular oxygen, producing superoxide through an outer-sphere reaction. Activation of the NADPH oxidase complex is initiated by the assembly of cytosolic subunits of the NADPH oxidase complex with the core NADPH oxidase complex to form a complex at the plasma membrane or phagosomal membrane. This activation process is initiated by phosphorylation dependent binding of the cytosolic NCF1/p47-phox subunit to the C-terminus of CYBA/p22-phox. Aassociates with NOX3 to form a functional NADPH oxidase constitutively generating superoxide. In Homo sapiens (Human), this protein is Cytochrome b-245 light chain.